Reading from the N-terminus, the 465-residue chain is Cysteine--tRNA ligase (465 aa).

C27 is a Zn(2+) binding site. Residues 29–39 carry the 'HIGH' region motif; it reads PTVYDDAHLGH. Positions 207, 237, and 241 each coordinate Zn(2+). A 'KMSKS' region motif is present at residues 269–273; it reads KMSKS. K272 contacts ATP.

It belongs to the class-I aminoacyl-tRNA synthetase family. As to quaternary structure, monomer. Zn(2+) is required as a cofactor.

It is found in the cytoplasm. It carries out the reaction tRNA(Cys) + L-cysteine + ATP = L-cysteinyl-tRNA(Cys) + AMP + diphosphate. This chain is Cysteine--tRNA ligase, found in Helicobacter pylori (strain P12).